Here is a 403-residue protein sequence, read N- to C-terminus: Protein-glutamate methylesterase/protein-glutamine glutaminase (403 aa).

The Response regulatory domain occupies 8–126 (AVLIVDDSAL…SAHLRTVSRK (119 aa)). The residue at position 59 (D59) is a 4-aspartylphosphate. The CheB-type methylesterase domain occupies 204-393 (PLRESGALQI…VSLDDMAATI (190 aa)). Residues S219, H246, and D342 contribute to the active site.

Belongs to the CheB family. Post-translationally, phosphorylated by CheA. Phosphorylation of the N-terminal regulatory domain activates the methylesterase activity.

Its subcellular location is the cytoplasm. The catalysed reaction is [protein]-L-glutamate 5-O-methyl ester + H2O = L-glutamyl-[protein] + methanol + H(+). The enzyme catalyses L-glutaminyl-[protein] + H2O = L-glutamyl-[protein] + NH4(+). Functionally, involved in chemotaxis. Part of a chemotaxis signal transduction system that modulates chemotaxis in response to various stimuli. Catalyzes the demethylation of specific methylglutamate residues introduced into the chemoreceptors (methyl-accepting chemotaxis proteins or MCP) by CheR. Also mediates the irreversible deamidation of specific glutamine residues to glutamic acid. This Treponema pallidum (strain Nichols) protein is Protein-glutamate methylesterase/protein-glutamine glutaminase.